A 611-amino-acid chain; its full sequence is UvrABC system protein C (611 aa).

The 78-residue stretch at 14-91 (TSPGCYIHKD…IKENKPKYNI (78 aa)) folds into the GIY-YIG domain. The region spanning 196–231 (DQIIEDLRGKMAGAAQTMEFEKAAEYRDLIQSIGTL) is the UVR domain.

Belongs to the UvrC family. Interacts with UvrB in an incision complex.

The protein localises to the cytoplasm. Functionally, the UvrABC repair system catalyzes the recognition and processing of DNA lesions. UvrC both incises the 5' and 3' sides of the lesion. The N-terminal half is responsible for the 3' incision and the C-terminal half is responsible for the 5' incision. This chain is UvrABC system protein C, found in Streptococcus gordonii (strain Challis / ATCC 35105 / BCRC 15272 / CH1 / DL1 / V288).